The sequence spans 490 residues: MDNKNFQSKTGFNLENTYLTLPNIFFSEQNPKGSKNPKLIKFNTSLAEELGLNEEVLNSDFGLNIFAGNETFPGIVPIAQAYAGHQFGHFTMLGDGRALLLGEHVTKDCKRYDVQLKGSGRTIYSRGGDGKAALAPMLREYIISEGMHGLGIPTTRSLAVVSTGEEVLRERFEQGAILTRIASSHIRVGTFAYAAQWGTLEDLKSLADYTIKRHFPNIADNENKYILFLEEVINRQAELIVKWQSVGFIHGVMNTDNMVISGETIDYGPCAFMDTYDTNTVFSSIDYAGRYAYGNQPNMALWNLARFSEALLPLLNPNLDEAVNIAKKSISNFSKLYKKYWFNKMRTKLGLFTEKENDELLIEGLLSTMQKYEADFTNTFVSLTLNKFEDEKVFSSDEFKTWYALWQNRLKEENRPQEEVRNLMMNNNPYIIPRNHLVEEALKNAEKGDFTFMDNLLEALKNPYSYSKDLEKYTKLPEKSDTPYVTYCGT.

Residues glycine 94, glycine 96, arginine 97, lysine 117, aspartate 129, glycine 130, arginine 180, and arginine 187 each contribute to the ATP site. The active-site Proton acceptor is the aspartate 256. Mg(2+)-binding residues include asparagine 257 and aspartate 266. Residue aspartate 266 participates in ATP binding.

This sequence belongs to the SELO family. It depends on Mg(2+) as a cofactor. Requires Mn(2+) as cofactor.

It carries out the reaction L-seryl-[protein] + ATP = 3-O-(5'-adenylyl)-L-seryl-[protein] + diphosphate. The catalysed reaction is L-threonyl-[protein] + ATP = 3-O-(5'-adenylyl)-L-threonyl-[protein] + diphosphate. It catalyses the reaction L-tyrosyl-[protein] + ATP = O-(5'-adenylyl)-L-tyrosyl-[protein] + diphosphate. The enzyme catalyses L-histidyl-[protein] + UTP = N(tele)-(5'-uridylyl)-L-histidyl-[protein] + diphosphate. It carries out the reaction L-seryl-[protein] + UTP = O-(5'-uridylyl)-L-seryl-[protein] + diphosphate. The catalysed reaction is L-tyrosyl-[protein] + UTP = O-(5'-uridylyl)-L-tyrosyl-[protein] + diphosphate. Its function is as follows. Nucleotidyltransferase involved in the post-translational modification of proteins. It can catalyze the addition of adenosine monophosphate (AMP) or uridine monophosphate (UMP) to a protein, resulting in modifications known as AMPylation and UMPylation. This chain is Protein nucleotidyltransferase YdiU, found in Clostridium perfringens (strain 13 / Type A).